Consider the following 38-residue polypeptide: Potassium channel toxin alpha-KTx 2.15 (38 aa).

3 disulfide bridges follow: Cys7–Cys29, Cys13–Cys34, and Cys17–Cys36.

Belongs to the short scorpion toxin superfamily. Potassium channel inhibitor family. Alpha-KTx 02 subfamily. In terms of tissue distribution, expressed by the venom gland.

It localises to the secreted. In terms of biological role, blocks human voltage-gated potassium channels Kv1.2/KCNA2 (IC(50)=0.3 nM), Kv1.3/KCNA3 (IC(50)=8.3 nM) and Shaker IR (with inactivation domain removed) (IC(50)=12 nM) and blocks intermediate conductance calcium-activated potassium channel KCa3.1/KCNN4 (IC(50)=6.4 nM). In Centruroides tecomanus (Scorpion), this protein is Potassium channel toxin alpha-KTx 2.15.